The sequence spans 62 residues: Large ribosomal subunit protein bL28 (62 aa).

A disordered region spans residues 1 to 24 (MARKCVITGRKTKAGNNRSHAMNS). Polar residues predominate over residues 14–24 (AGNNRSHAMNS).

It belongs to the bacterial ribosomal protein bL28 family.

This chain is Large ribosomal subunit protein bL28, found in Bacillus pumilus (strain SAFR-032).